Here is a 341-residue protein sequence, read N- to C-terminus: Ribulose-5-phosphate reductase (341 aa).

C38, H64, E65, and E144 together coordinate Zn(2+).

This sequence belongs to the zinc-containing alcohol dehydrogenase family. Requires Zn(2+) as cofactor.

It catalyses the reaction D-ribitol 5-phosphate + NADP(+) = D-ribulose 5-phosphate + NADPH + H(+). It participates in cell wall biogenesis; poly(ribitol phosphate) teichoic acid biosynthesis. In terms of biological role, catalyzes the NADPH dependent reduction of D-ribulose 5-phosphate to D-ribitol 5-phosphate. This is Ribulose-5-phosphate reductase from Bacillus spizizenii (strain ATCC 23059 / NRRL B-14472 / W23) (Bacillus subtilis subsp. spizizenii).